Consider the following 260-residue polypeptide: ARL14 effector protein (260 aa).

Residue Met-1 is modified to N-acetylmethionine. Lys-177 is covalently cross-linked (Glycyl lysine isopeptide (Lys-Gly) (interchain with G-Cter in SUMO2)). Ser-183 carries the post-translational modification Phosphoserine.

Interacts with ARL14 and MYO1E.

It is found in the cytoplasm. In terms of biological role, through its interaction with ARL14 and MYO1E, may connect MHC class II-containing cytoplasmic vesicles to the actin network and hence controls the movement of these vesicles along the actin cytoskeleton in dendritic cells. This is ARL14 effector protein (ARL14EP) from Bos taurus (Bovine).